We begin with the raw amino-acid sequence, 674 residues long: Anosmin-1 (674 aa).

A signal peptide spans 1-21; it reads MVRRAPGASLALLLWVTAVSC. Intrachain disulfides connect Cys47–Cys71, Cys80–Cys99, Cys84–Cys95, and Cys110–Cys114. An N-linked (GlcNAc...) asparagine glycan is attached at Asn65. A WAP domain is found at 121–170; sequence LSVKQGDCPAPEKASGFAAACFESCEADSECSGVKKCCSNGCGHTCQVPK. Fibronectin type-III domains follow at residues 180–281, 286–392, 418–515, and 545–652; these read PRKE…SKDP, APSN…TTQD, RRKP…FFVT, and KPEN…DLPP. 2 N-linked (GlcNAc...) asparagine glycosylation sites follow: Asn203 and Asn294. Residues 388 to 402 are compositionally biased toward polar residues; it reads STTQDNRNNNEQTSV. The interval 388-413 is disordered; sequence STTQDNRNNNEQTSVEKPPKGVVDPY. N-linked (GlcNAc...) asparagine glycosylation is found at Asn465, Asn548, and Asn559. Positions 655 to 674 are disordered; the sequence is PHRPHLKHHPHRYKPPPEKY. Over residues 656–668 the composition is skewed to basic residues; that stretch reads HRPHLKHHPHRYK.

The protein resides in the cell surface. Its function is as follows. May be an adhesion-like molecule with anti-protease activity. The chain is Anosmin-1 from Coturnix japonica (Japanese quail).